We begin with the raw amino-acid sequence, 403 residues long: Coenzyme A biosynthesis bifunctional protein CoaBC (403 aa).

The segment at 1-197 (MLHHVKLIYA…LHPKSLEGKR (197 aa)) is phosphopantothenoylcysteine decarboxylase. The interval 198-403 (VLVTAGATRE…RLWDEIEKML (206 aa)) is phosphopantothenate--cysteine ligase. Positions 287, 297, and 330 each coordinate CTP.

The protein in the N-terminal section; belongs to the HFCD (homo-oligomeric flavin containing Cys decarboxylase) superfamily. In the C-terminal section; belongs to the PPC synthetase family. The cofactor is Mg(2+). It depends on FMN as a cofactor.

The enzyme catalyses N-[(R)-4-phosphopantothenoyl]-L-cysteine + H(+) = (R)-4'-phosphopantetheine + CO2. The catalysed reaction is (R)-4'-phosphopantothenate + L-cysteine + CTP = N-[(R)-4-phosphopantothenoyl]-L-cysteine + CMP + diphosphate + H(+). It functions in the pathway cofactor biosynthesis; coenzyme A biosynthesis. In terms of biological role, catalyzes two sequential steps in the biosynthesis of coenzyme A. In the first step cysteine is conjugated to 4'-phosphopantothenate to form 4-phosphopantothenoylcysteine. In the second step the latter compound is decarboxylated to form 4'-phosphopantotheine. This is Coenzyme A biosynthesis bifunctional protein CoaBC from Thermococcus kodakarensis (strain ATCC BAA-918 / JCM 12380 / KOD1) (Pyrococcus kodakaraensis (strain KOD1)).